The sequence spans 511 residues: Protein HESO1 (511 aa).

Residues 378-511 form a disordered region; that stretch reads ARPQNQQMQQ…GQIWRPRHEQ (134 aa). Residues 381–392 show a composition bias toward low complexity; that stretch reads QNQQMQQNWSQS. A compositionally biased stretch (polar residues) spans 404-465; sequence LTQSRPQQNW…TSAGSSQNQG (62 aa).

The protein belongs to the DNA polymerase type-B-like family.

It is found in the cytoplasm. Its subcellular location is the P-body. The protein resides in the nucleus. The enzyme catalyses RNA(n) + UTP = RNA(n)-3'-uridine ribonucleotide + diphosphate. Completely inhibited by 2'-O-methylation on the substrate RNA. Functionally, uridylates small RNAs to trigger their degradation. Catalyzes the uridylation of 5' fragments produced by AGO1-mediated cleavage of miRNA target RNAs. Acts synergistically with URT1 in unmethylated miRNA uridylation, leading to their degradation. URT1 and HESO1 prefer substrates with different 3' end nucleotides and act cooperatively to tail different forms of the same miRNAs. URT1 and HESO1 act sequentially, with URT1 mono-uridylating the miRNAs followed by their further uridylation by HESO1. URT1 and HESO1 are involved in the uridylation and clearance of RISC-generated 5' mRNA fragments. Able to act on AGO1-bound miRNAs and the uridylated species stay associated with AGO1. This chain is Protein HESO1, found in Arabidopsis thaliana (Mouse-ear cress).